The chain runs to 426 residues: Casein kinase I (426 aa).

The region spanning 9–278 is the Protein kinase domain; the sequence is YRISRKIGGG…LRKLLREMFV (270 aa). ATP-binding positions include 15–23 and K38; that span reads IGGGSFGEI. The Proton acceptor role is filled by D128. Disordered regions lie at residues 340–360 and 377–426; these read TTTT…TVSN and PSYN…PPAK. The span at 345-360 shows a compositional bias: polar residues; it reads SSSQPSNVKNISTVSN. The span at 386 to 404 shows a compositional bias: low complexity; it reads QSPQQTTTTTSSSNPNQTT. Residues 414 to 426 are compositionally biased toward polar residues; it reads PQSSSTTTKPPAK.

Belongs to the protein kinase superfamily. CK1 Ser/Thr protein kinase family. Casein kinase I subfamily. In terms of assembly, monomer. Post-translationally, autophosphorylated.

The protein resides in the cytoplasm. It is found in the nucleus. The catalysed reaction is L-seryl-[protein] + ATP = O-phospho-L-seryl-[protein] + ADP + H(+). It carries out the reaction L-threonyl-[protein] + ATP = O-phospho-L-threonyl-[protein] + ADP + H(+). Functionally, casein kinases are operationally defined by their preferential utilization of acidic proteins such as caseins as substrates. Can phosphorylate a large number of proteins. May have a role in DNA repair mechanism and support vegetative growth of the cells. In Dictyostelium discoideum (Social amoeba), this protein is Casein kinase I (cak1-1).